Reading from the N-terminus, the 100-residue chain is NADH-quinone oxidoreductase subunit K (100 aa).

Transmembrane regions (helical) follow at residues Leu4–Ile24, Leu28–Val48, and Val60–Leu80.

Belongs to the complex I subunit 4L family. As to quaternary structure, NDH-1 is composed of 13 different subunits. Subunits NuoA, H, J, K, L, M, N constitute the membrane sector of the complex.

The protein localises to the cell inner membrane. It catalyses the reaction a quinone + NADH + 5 H(+)(in) = a quinol + NAD(+) + 4 H(+)(out). Functionally, NDH-1 shuttles electrons from NADH, via FMN and iron-sulfur (Fe-S) centers, to quinones in the respiratory chain. The immediate electron acceptor for the enzyme in this species is believed to be ubiquinone. Couples the redox reaction to proton translocation (for every two electrons transferred, four hydrogen ions are translocated across the cytoplasmic membrane), and thus conserves the redox energy in a proton gradient. The chain is NADH-quinone oxidoreductase subunit K from Edwardsiella ictaluri (strain 93-146).